We begin with the raw amino-acid sequence, 415 residues long: Serine--tRNA ligase (415 aa).

L-serine is bound at residue 231 to 233; it reads TAE. Residue 262–264 coordinates ATP; that stretch reads RSE. Glu285 contributes to the L-serine binding site. An ATP-binding site is contributed by 349-352; it reads EISS. Residue Ser383 participates in L-serine binding.

Belongs to the class-II aminoacyl-tRNA synthetase family. Type-1 seryl-tRNA synthetase subfamily. As to quaternary structure, homodimer. The tRNA molecule binds across the dimer.

Its subcellular location is the cytoplasm. It carries out the reaction tRNA(Ser) + L-serine + ATP = L-seryl-tRNA(Ser) + AMP + diphosphate + H(+). The catalysed reaction is tRNA(Sec) + L-serine + ATP = L-seryl-tRNA(Sec) + AMP + diphosphate + H(+). Its pathway is aminoacyl-tRNA biosynthesis; selenocysteinyl-tRNA(Sec) biosynthesis; L-seryl-tRNA(Sec) from L-serine and tRNA(Sec): step 1/1. Functionally, catalyzes the attachment of serine to tRNA(Ser). Is also able to aminoacylate tRNA(Sec) with serine, to form the misacylated tRNA L-seryl-tRNA(Sec), which will be further converted into selenocysteinyl-tRNA(Sec). The protein is Serine--tRNA ligase of Helicobacter pylori (strain HPAG1).